A 120-amino-acid chain; its full sequence is Dynein 11 kDa light chain, flagellar outer arm (120 aa).

The protein belongs to the dynein light chain family. As to quaternary structure, consists of at least 3 heavy chains (alpha, beta and gamma), 2 intermediate chains and 8 light chains.

The protein localises to the cytoplasm. It localises to the cytoskeleton. Its subcellular location is the flagellum axoneme. The polypeptide is Dynein 11 kDa light chain, flagellar outer arm (Chlamydomonas reinhardtii (Chlamydomonas smithii)).